A 506-amino-acid polypeptide reads, in one-letter code: NADH-quinone oxidoreductase subunit N (506 aa).

14 consecutive transmembrane segments (helical) span residues 14–34, 40–60, 72–92, 109–129, 131–151, 166–186, 209–229, 256–276, 286–306, 314–334, 343–363, 385–405, 420–440, and 465–485; these read MVPE…DLFF, YVAL…ITLY, FVLD…AALI, GEYY…ASSV, FVTL…LVGI, VING…LYGI, LLLA…IATV, MAGF…VSVQ, MSIY…VVAL, LFAY…VALS, FYML…HGLI, AIVM…AGFI, AHYV…VYYF, and IVMS…MIGY.

It belongs to the complex I subunit 2 family. In terms of assembly, NDH-1 is composed of 14 different subunits. Subunits NuoA, H, J, K, L, M, N constitute the membrane sector of the complex.

It is found in the cell membrane. The enzyme catalyses a quinone + NADH + 5 H(+)(in) = a quinol + NAD(+) + 4 H(+)(out). Its function is as follows. NDH-1 shuttles electrons from NADH, via FMN and iron-sulfur (Fe-S) centers, to quinones in the respiratory chain. The immediate electron acceptor for the enzyme in this species is believed to be a menaquinone. Couples the redox reaction to proton translocation (for every two electrons transferred, four hydrogen ions are translocated across the cytoplasmic membrane), and thus conserves the redox energy in a proton gradient. This Bacillus anthracis protein is NADH-quinone oxidoreductase subunit N.